Here is a 387-residue protein sequence, read N- to C-terminus: MADQKDYYETLGVSRDADDDTIRKAFRKLSKKYHPDLNHAPGAEQKFKDINEAYQVLSDPQKRAAYDQYGSADGPQGFGGAGAGQGGFSDFGGGQGGFGGFDDIFSQFFGGAGGGAQANPSAPRQGADLQYRMDLTFEEAIFGKDTKISYDREAVCHTCNGSGAKPGTSPVTCHKCHGSGYIQVQRNTAFGAMMTRQVCDVCGGTGKEIKEKCPTCHGTGHEQERHTIDVKVPAGVEDGQQMRLQQAGEAGTNGGPYGDLYIVFRVAPSKKYQRDGSEIYLTIPLSFAQAALGDEIKVDTVHGAVELKIPAGTQSQTKFRLRGKGAPRLRGNGTGDQIVTVEVQTPKHLNEKQKSALMQFAAASGEDVTPHNGTLFDRVKEAFKGGK.

The 65-residue stretch at 6–70 folds into the J domain; sequence DYYETLGVSR…QKRAAYDQYG (65 aa). Residues 143 to 225 form a CR-type zinc finger; it reads GKDTKISYDR…CHGTGHEQER (83 aa). Residues Cys-156, Cys-159, Cys-173, Cys-176, Cys-199, Cys-202, Cys-213, and Cys-216 each contribute to the Zn(2+) site. CXXCXGXG motif repeat units lie at residues 156-163, 173-180, 199-206, and 213-220; these read CHTCNGSG, CHKCHGSG, CDVCGGTG, and CPTCHGTG.

This sequence belongs to the DnaJ family. Homodimer. Zn(2+) is required as a cofactor.

Its subcellular location is the cytoplasm. Functionally, participates actively in the response to hyperosmotic and heat shock by preventing the aggregation of stress-denatured proteins and by disaggregating proteins, also in an autonomous, DnaK-independent fashion. Unfolded proteins bind initially to DnaJ; upon interaction with the DnaJ-bound protein, DnaK hydrolyzes its bound ATP, resulting in the formation of a stable complex. GrpE releases ADP from DnaK; ATP binding to DnaK triggers the release of the substrate protein, thus completing the reaction cycle. Several rounds of ATP-dependent interactions between DnaJ, DnaK and GrpE are required for fully efficient folding. Also involved, together with DnaK and GrpE, in the DNA replication of plasmids through activation of initiation proteins. This Lacticaseibacillus paracasei (strain ATCC 334 / BCRC 17002 / CCUG 31169 / CIP 107868 / KCTC 3260 / NRRL B-441) (Lactobacillus paracasei) protein is Chaperone protein DnaJ.